Here is a 283-residue protein sequence, read N- to C-terminus: Adenosyl-chloride synthase (283 aa).

Substrate is bound by residues Asp11, 70–72, and 128–131; these read YVY and TWYG. Residue Gly131 participates in chloride binding.

This sequence belongs to the SAM hydrolase / SAM-dependent halogenase family. Homotrimer.

The catalysed reaction is chloride + S-adenosyl-L-methionine = 5'-chloro-5'-deoxyadenosine + L-methionine. Involved in the biosynthesis of the proteosome inhibitor salinosporamide A (SalA). Catalyzes the halogenation of S-adenosyl-L-methionine (SAM) with chloride to generate 5'-chloro-5'-deoxyadenosine (5'-CIDA) and L-methionine. It can also use bromide and iodide, producing halogenated 5'-deoxyadenosine (5'-XDA) and L-methionine, however no halogenase activity is detected in the presence of fluoride. The polypeptide is Adenosyl-chloride synthase (Salinispora tropica (strain ATCC BAA-916 / DSM 44818 / JCM 13857 / NBRC 105044 / CNB-440)).